We begin with the raw amino-acid sequence, 358 residues long: UDP-N-acetylglucosamine--N-acetylmuramyl-(pentapeptide) pyrophosphoryl-undecaprenol N-acetylglucosamine transferase (358 aa).

UDP-N-acetyl-alpha-D-glucosamine-binding positions include 11–13 (TGG), Asn-124, Arg-164, Ser-195, and Gln-291.

The protein belongs to the glycosyltransferase 28 family. MurG subfamily.

The protein localises to the cell inner membrane. The catalysed reaction is di-trans,octa-cis-undecaprenyl diphospho-N-acetyl-alpha-D-muramoyl-L-alanyl-D-glutamyl-meso-2,6-diaminopimeloyl-D-alanyl-D-alanine + UDP-N-acetyl-alpha-D-glucosamine = di-trans,octa-cis-undecaprenyl diphospho-[N-acetyl-alpha-D-glucosaminyl-(1-&gt;4)]-N-acetyl-alpha-D-muramoyl-L-alanyl-D-glutamyl-meso-2,6-diaminopimeloyl-D-alanyl-D-alanine + UDP + H(+). It participates in cell wall biogenesis; peptidoglycan biosynthesis. In terms of biological role, cell wall formation. Catalyzes the transfer of a GlcNAc subunit on undecaprenyl-pyrophosphoryl-MurNAc-pentapeptide (lipid intermediate I) to form undecaprenyl-pyrophosphoryl-MurNAc-(pentapeptide)GlcNAc (lipid intermediate II). The polypeptide is UDP-N-acetylglucosamine--N-acetylmuramyl-(pentapeptide) pyrophosphoryl-undecaprenol N-acetylglucosamine transferase (Leptospira interrogans serogroup Icterohaemorrhagiae serovar copenhageni (strain Fiocruz L1-130)).